A 276-amino-acid polypeptide reads, in one-letter code: UPF0328 protein ECU04_0100 (276 aa).

The segment at 1-24 is disordered; sequence MGIIDVQRSHLTATPSKERDAPAH.

It belongs to the UPF0328 family.

In Encephalitozoon cuniculi (strain GB-M1) (Microsporidian parasite), this protein is UPF0328 protein ECU04_0100.